The sequence spans 305 residues: UDP-3-O-acyl-N-acetylglucosamine deacetylase (305 aa).

Positions 79, 238, and 242 each coordinate Zn(2+). His265 (proton donor) is an active-site residue.

This sequence belongs to the LpxC family. Zn(2+) serves as cofactor.

The catalysed reaction is a UDP-3-O-[(3R)-3-hydroxyacyl]-N-acetyl-alpha-D-glucosamine + H2O = a UDP-3-O-[(3R)-3-hydroxyacyl]-alpha-D-glucosamine + acetate. It participates in glycolipid biosynthesis; lipid IV(A) biosynthesis; lipid IV(A) from (3R)-3-hydroxytetradecanoyl-[acyl-carrier-protein] and UDP-N-acetyl-alpha-D-glucosamine: step 2/6. Catalyzes the hydrolysis of UDP-3-O-myristoyl-N-acetylglucosamine to form UDP-3-O-myristoylglucosamine and acetate, the committed step in lipid A biosynthesis. The chain is UDP-3-O-acyl-N-acetylglucosamine deacetylase from Haemophilus influenzae (strain PittGG).